We begin with the raw amino-acid sequence, 546 residues long: Protein FAM124A (546 aa).

3 disordered regions span residues 1–37 (MDPKAGGGGEEDDCVDSGAETGGSDYSHLSSTSSELS), 285–361 (KFPK…QRSK), and 488–546 (SSSS…EFYI). Residues 24–36 (SDYSHLSSTSSEL) show a composition bias toward low complexity. The span at 285–302 (KFPKPGRVHHSSEKKRHS) shows a compositional bias: basic residues. 2 stretches are compositionally biased toward polar residues: residues 304-324 (PLPSTAVPSHTPGSSQQSPLN) and 347-361 (ANSTPNPPWSFQRSK). Over residues 488-511 (SSSSATARAAPPAPSTSTLTDSSP) the composition is skewed to low complexity.

Belongs to the FAM124 family.

The chain is Protein FAM124A (FAM124A) from Pongo abelii (Sumatran orangutan).